A 259-amino-acid polypeptide reads, in one-letter code: Imidazole glycerol phosphate synthase subunit HisF (259 aa).

Residues aspartate 11 and aspartate 130 contribute to the active site.

It belongs to the HisA/HisF family. In terms of assembly, heterodimer of HisH and HisF.

The protein localises to the cytoplasm. The catalysed reaction is 5-[(5-phospho-1-deoxy-D-ribulos-1-ylimino)methylamino]-1-(5-phospho-beta-D-ribosyl)imidazole-4-carboxamide + L-glutamine = D-erythro-1-(imidazol-4-yl)glycerol 3-phosphate + 5-amino-1-(5-phospho-beta-D-ribosyl)imidazole-4-carboxamide + L-glutamate + H(+). It participates in amino-acid biosynthesis; L-histidine biosynthesis; L-histidine from 5-phospho-alpha-D-ribose 1-diphosphate: step 5/9. In terms of biological role, IGPS catalyzes the conversion of PRFAR and glutamine to IGP, AICAR and glutamate. The HisF subunit catalyzes the cyclization activity that produces IGP and AICAR from PRFAR using the ammonia provided by the HisH subunit. The protein is Imidazole glycerol phosphate synthase subunit HisF of Nitratidesulfovibrio vulgaris (strain DP4) (Desulfovibrio vulgaris).